The primary structure comprises 69 residues: FXYD domain-containing ion transport regulator 11 (69 aa).

Residues 1–22 (MSQLTELVLLTVFLALFSRAEA) form the signal peptide. Over 23-33 (NPFVYNYEALR) the chain is Extracellular. A helical membrane pass occupies residues 34–54 (IGGLVFTCVLVAGAVTALCWG). Over 55-69 (QCKPKRKHDDDASKI) the chain is Cytoplasmic.

It belongs to the FXYD family. In terms of tissue distribution, detected in adult gill and in larval skin at 2 days post-fertilization (at protein level). In adult gill, strong expression is found in the basal regions of the secondary lamellae.

The protein resides in the cell membrane. Functionally, may modulate the activity of a sodium/potassium-transporting ATPase. The polypeptide is FXYD domain-containing ion transport regulator 11 (Danio rerio (Zebrafish)).